A 753-amino-acid chain; its full sequence is Transcription factor SOX-30 (753 aa).

Disordered regions lie at residues methionine 1–alanine 45 and glutamine 140–arginine 161. Residues glutamate 7 to leucine 22 show a composition bias toward pro residues. Residues valine 337–valine 405 constitute a DNA-binding region (HMG box). Disordered stretches follow at residues alanine 514–leucine 540 and proline 726–leucine 753. 2 stretches are compositionally biased toward polar residues: residues threonine 531–leucine 540 and proline 726–threonine 739.

Interacts with CTNNB1, competitively inhibiting CTNNB1-TCF7L2/TCF4 interaction.

Its subcellular location is the nucleus. The protein resides in the cytoplasm. Its function is as follows. Acts both as a transcriptional activator and a repressor. Binds to the DNA sequence 5'-ACAAT-3' and shows a preference for guanine residues surrounding this core motif. Binds to its own promoter and activates its own transcription. Required to activate the expression of postmeiotic genes involved in spermiogenesis. Binds to the promoter region of CTNNB1 and represses its transcription which leads to inhibition of Wnt signaling. Also inhibits Wnt signaling by binding to the CTNNB1 protein, preventing interaction of CTNNB1 with TCF7L2/TCF4. The polypeptide is Transcription factor SOX-30 (SOX30) (Macaca fascicularis (Crab-eating macaque)).